The following is a 333-amino-acid chain: Probable tRNA pseudouridine synthase B (333 aa).

Over residues 1–14 (MKCPSREVFSKFEE) the composition is skewed to basic and acidic residues. The tract at residues 1–27 (MKCPSREVFSKFEESTNPQWGKPPSQR) is disordered. The active-site Nucleophile is the Asp71. A PUA domain is found at 238 to 313 (LPKIWVRDSA…LVARTDRVVM (76 aa)).

It belongs to the pseudouridine synthase TruB family. Type 2 subfamily.

It catalyses the reaction uridine(55) in tRNA = pseudouridine(55) in tRNA. Could be responsible for synthesis of pseudouridine from uracil-55 in the psi GC loop of transfer RNAs. This Pyrobaculum aerophilum (strain ATCC 51768 / DSM 7523 / JCM 9630 / CIP 104966 / NBRC 100827 / IM2) protein is Probable tRNA pseudouridine synthase B.